The sequence spans 294 residues: Endolytic peptidoglycan transglycosylase RlpA (294 aa).

Positions 1–23 are cleaved as a signal peptide; that stretch reads MKQKIFQILTALCCIFYVMSAQA. One can recognise an SPOR domain in the interval 216–291; that stretch reads EKYTTVYKIR…NYSKPLIVYT (76 aa).

The protein belongs to the RlpA family.

Lytic transglycosylase with a strong preference for naked glycan strands that lack stem peptides. The polypeptide is Endolytic peptidoglycan transglycosylase RlpA (Pasteurella multocida (strain Pm70)).